Here is a 224-residue protein sequence, read N- to C-terminus: Small ribosomal subunit protein uS5 (224 aa).

The interval 1–40 (MAEQPAGGQGAGDSRDSRGDRDSRGRRGDGGRGGRDRDGD) is disordered. The span at 13-40 (DSRDSRGDRDSRGRRGDGGRGGRDRDGD) shows a compositional bias: basic and acidic residues. One can recognise an S5 DRBM domain in the interval 44-107 (YLERVVAINR…EEARKGFFRV (64 aa)).

It belongs to the universal ribosomal protein uS5 family. As to quaternary structure, part of the 30S ribosomal subunit. Contacts proteins S4 and S8.

Functionally, with S4 and S12 plays an important role in translational accuracy. Located at the back of the 30S subunit body where it stabilizes the conformation of the head with respect to the body. In Mycolicibacterium paratuberculosis (strain ATCC BAA-968 / K-10) (Mycobacterium paratuberculosis), this protein is Small ribosomal subunit protein uS5.